The chain runs to 284 residues: 3-oxoadipate:acetyl-CoA acetyltransferase (284 aa).

Residues His47, His49, and Glu229 each contribute to the Zn(2+) site.

This sequence belongs to the BKACE family. Zn(2+) serves as cofactor.

It carries out the reaction 3-oxoadipate + acetyl-CoA = acetoacetate + succinyl-CoA. Catalyzes the condensation of 3-oxoadipate (beta-ketoadipate) and acetyl-CoA, forming acetoacetate and succinyl-CoA. Is likely involved is the degradation of 3-oxoadipate through an alternative pathway, within catechol degradation. In Cupriavidus necator (strain ATCC 17699 / DSM 428 / KCTC 22496 / NCIMB 10442 / H16 / Stanier 337) (Ralstonia eutropha), this protein is 3-oxoadipate:acetyl-CoA acetyltransferase.